A 208-amino-acid polypeptide reads, in one-letter code: dTTP/UTP pyrophosphatase (208 aa).

The Proton acceptor role is filled by D79.

This sequence belongs to the Maf family. YhdE subfamily. A divalent metal cation serves as cofactor.

The protein resides in the cytoplasm. The catalysed reaction is dTTP + H2O = dTMP + diphosphate + H(+). The enzyme catalyses UTP + H2O = UMP + diphosphate + H(+). Functionally, nucleoside triphosphate pyrophosphatase that hydrolyzes dTTP and UTP. May have a dual role in cell division arrest and in preventing the incorporation of modified nucleotides into cellular nucleic acids. In Mesorhizobium japonicum (strain LMG 29417 / CECT 9101 / MAFF 303099) (Mesorhizobium loti (strain MAFF 303099)), this protein is dTTP/UTP pyrophosphatase.